The following is a 746-amino-acid chain: Exostosin-1 (746 aa).

Topologically, residues 1–7 (MQAKKRY) are cytoplasmic. A helical; Signal-anchor for type II membrane protein transmembrane segment spans residues 8-28 (FILLSAGSCLALLFYFGGLQF). The Lumenal portion of the chain corresponds to 29–746 (RASRSHSRRE…RKKYRDIERL (718 aa)). N-linked (GlcNAc...) asparagine glycosylation occurs at asparagine 89. Disulfide bonds link cysteine 98–cysteine 103 and cysteine 109–cysteine 152. Leucine 166 and tyrosine 203 together coordinate a protein. Positions 267, 269, 271, and 280 each coordinate UDP. A disulfide bridge links cysteine 298 with cysteine 312. Histidine 300 provides a ligand contact to a protein. Positions 319 and 324 each coordinate UDP. N-linked (GlcNAc...) asparagine glycosylation occurs at asparagine 330. Intrachain disulfides connect cysteine 334/cysteine 355 and cysteine 652/cysteine 704. Arginine 346 and glutamate 349 together coordinate UDP.

This sequence belongs to the glycosyltransferase 47 family. As to quaternary structure, part of the heparan sulfate polymerase, a dimeric complex composed of EXT1 and EXT2. Could also form homooligomeric complexes. Interacts with NDST1. Post-translationally, N-glycosylated.

It is found in the golgi apparatus membrane. The protein resides in the golgi apparatus. Its subcellular location is the cis-Golgi network membrane. The protein localises to the endoplasmic reticulum membrane. It catalyses the reaction 3-O-{alpha-D-GlcNAc-[(1-&gt;4)-beta-D-GlcA-(1-&gt;4)-alpha-D-GlcNAc](n)-(1-&gt;4)-beta-D-GlcA-(1-&gt;3)-beta-D-Gal-(1-&gt;3)-beta-D-Gal-(1-&gt;4)-beta-D-Xyl}-L-seryl-[protein] + UDP-alpha-D-glucuronate = 3-O-{[(1-&gt;4)-beta-D-GlcA-(1-&gt;4)-alpha-D-GlcNAc](n+1)-(1-&gt;4)-beta-D-GlcA-(1-&gt;3)-beta-D-Gal-(1-&gt;3)-beta-D-Gal-(1-&gt;4)-beta-D-Xyl}-L-seryl-[protein] + UDP + H(+). Its pathway is protein modification; protein glycosylation. Functionally, glycosyltransferase forming with EXT2 the heterodimeric heparan sulfate polymerase which catalyzes the elongation of the heparan sulfate glycan backbone. Glycan backbone extension consists in the alternating transfer of (1-&gt;4)-beta-D-GlcA and (1-&gt;4)-alpha-D-GlcNAc residues from their respective UDP-sugar donors. Both EXT1 and EXT2 are required for the full activity of the polymerase since EXT1 bears the N-acetylglucosaminyl-proteoglycan 4-beta-glucuronosyltransferase activity within the complex while EXT2 carries the glucuronosyl-N-acetylglucosaminyl-proteoglycan 4-alpha-N-acetylglucosaminyltransferase activity. Heparan sulfate proteoglycans are ubiquitous components of the extracellular matrix and play an important role in tissue homeostasis and signaling. The sequence is that of Exostosin-1 (EXT1) from Bos taurus (Bovine).